We begin with the raw amino-acid sequence, 282 residues long: Pantothenate synthetase (282 aa).

30 to 37 is an ATP binding site; that stretch reads MGYYHAGH. Histidine 37 (proton donor) is an active-site residue. Glutamine 61 is a binding site for (R)-pantoate. Glutamine 61 lines the beta-alanine pocket. 147-150 is an ATP binding site; the sequence is GQKD. Glutamine 153 contacts (R)-pantoate. ATP is bound by residues valine 176 and 184 to 187; that span reads LSSR.

The protein belongs to the pantothenate synthetase family. In terms of assembly, homodimer.

The protein localises to the cytoplasm. It catalyses the reaction (R)-pantoate + beta-alanine + ATP = (R)-pantothenate + AMP + diphosphate + H(+). It functions in the pathway cofactor biosynthesis; (R)-pantothenate biosynthesis; (R)-pantothenate from (R)-pantoate and beta-alanine: step 1/1. Its function is as follows. Catalyzes the condensation of pantoate with beta-alanine in an ATP-dependent reaction via a pantoyl-adenylate intermediate. The polypeptide is Pantothenate synthetase (Desulfovibrio desulfuricans (strain ATCC 27774 / DSM 6949 / MB)).